A 204-amino-acid chain; its full sequence is TPR repeat-containing protein RHE_CH03534.1 (204 aa).

The signal sequence occupies residues 1–29 (MSAMRLFALTSAMLPLAFILSTSPFPATA). TPR repeat units lie at residues 84-117 (INLL…KPDY), 118-151 (AESW…EPRH), and 153-185 (GALS…YPAD).

The protein is TPR repeat-containing protein RHE_CH03534.1 of Rhizobium etli (strain ATCC 51251 / DSM 11541 / JCM 21823 / NBRC 15573 / CFN 42).